Consider the following 114-residue polypeptide: MAINPIVPIHPLMLQQALNPIQENNPVEGNGPQTPAGAAKVGADFGQFLQEALQKVDNLQKEADVASLGLATGQIQDLHTAVIAMEKAGLSLSLTVDVRNRALDAYHEIMRMQI.

This sequence belongs to the FliE family.

It localises to the bacterial flagellum basal body. In Desulfitobacterium hafniense (strain Y51), this protein is Flagellar hook-basal body complex protein FliE.